Here is a 285-residue protein sequence, read N- to C-terminus: Tetraspanin-3 (285 aa).

The Cytoplasmic segment spans residues M1 to H6. Residues L7–I27 traverse the membrane as a helical segment. The Extracellular segment spans residues W28–Q43. N-linked (GlcNAc...) asparagine glycosylation is present at N34. A helical membrane pass occupies residues W44–A64. Over C65–L71 the chain is Cytoplasmic. The chain crosses the membrane as a helical span at residues M72–F92. The Extracellular segment spans residues A93–K235. The N-linked (GlcNAc...) asparagine glycan is linked to N187. Residues V236 to A256 form a helical membrane-spanning segment. Topologically, residues A257–L285 are cytoplasmic.

This sequence belongs to the tetraspanin (TM4SF) family.

It localises to the cell membrane. May be involved in the regulation of cell differentiation. In Arabidopsis thaliana (Mouse-ear cress), this protein is Tetraspanin-3 (TET3).